Consider the following 393-residue polypeptide: Putative amino-acid ABC transporter permease protein YhdX (393 aa).

The next 8 membrane-spanning stretches (helical) occupy residues 21 to 41 (AWLFQILAVVAVVGIVGWLFH), 92 to 112 (LLVSALCIVFASVLGFFIGLA), 128 to 148 (IEIFRNIPPLLQIFFWYFAVL), 180 to 200 (DGFIAFILAVVMAIVLSVGLF), 219 to 239 (IAAVLIIGLPLLAQWLFGAAL), 256 to 276 (VLIPELAALTLALSVYTSAFI), 333 to 353 (SSLAAAIGYPDMVSLFAGTVL), and 363 to 383 (IAMTMSVYLIISLTISLLMNI). The ABC transmembrane type-1 domain maps to 88–381 (LLNTLLVSAL…IISLTISLLM (294 aa)).

This sequence belongs to the binding-protein-dependent transport system permease family. HisMQ subfamily.

It localises to the cell inner membrane. Probably part of the binding-protein-dependent transport system YdhWXYZ for an amino acid; probably responsible for the translocation of the substrate across the membrane. In Escherichia coli (strain K12), this protein is Putative amino-acid ABC transporter permease protein YhdX (yhdX).